Consider the following 226-residue polypeptide: Glutathione S-transferase kappa 1 (226 aa).

Glutathione is bound at residue 16-18 (SPY). N6-succinyllysine is present on K49. N53 contributes to the glutathione binding site. 2 positions are modified to N6-acetyllysine: K71 and K85. K116 is modified (N6-acetyllysine; alternate). An N6-succinyllysine; alternate modification is found at K116. K144 carries the N6-succinyllysine modification. N6-acetyllysine; alternate is present on K158. K158 is modified (N6-succinyllysine; alternate). N6-acetyllysine is present on residues K165 and K169. Glutathione-binding positions include L183 and 200–201 (SD).

Belongs to the GST superfamily. Kappa family. As to quaternary structure, homodimer. In terms of tissue distribution, ubiquitous.

The protein localises to the peroxisome. The catalysed reaction is RX + glutathione = an S-substituted glutathione + a halide anion + H(+). Functionally, glutathione S-transferase that catalyzes the conjugation of glutathione to exogenous and endogenous compounds. Significant glutathione conjugating activity is found only with the model substrate, 1-chloro-2,4-dinitrobenzene (CDNB). This is Glutathione S-transferase kappa 1 (GSTK1) from Homo sapiens (Human).